Consider the following 307-residue polypeptide: Pseudouridine-5'-phosphate glycosidase (307 aa).

The Proton donor role is filled by Glu-28. The substrate site is built by Lys-89 and Val-109. Residue Asp-141 participates in Mn(2+) binding. 143 to 145 (SAD) is a substrate binding site. The active-site Nucleophile is the Lys-162.

The protein belongs to the pseudouridine-5'-phosphate glycosidase family. As to quaternary structure, homotrimer. Mn(2+) serves as cofactor.

The enzyme catalyses D-ribose 5-phosphate + uracil = psi-UMP + H2O. Functionally, catalyzes the reversible cleavage of pseudouridine 5'-phosphate (PsiMP) to ribose 5-phosphate and uracil. Functions biologically in the cleavage direction, as part of a pseudouridine degradation pathway. In Staphylococcus aureus (strain MW2), this protein is Pseudouridine-5'-phosphate glycosidase.